Here is a 273-residue protein sequence, read N- to C-terminus: Large ribosomal subunit protein uL2cy (273 aa).

Disordered regions lie at residues 1–27 (MAIHLYKTSTPSTRNGAVDSQVKSNPR) and 224–273 (NPVD…RRRK).

Belongs to the universal ribosomal protein uL2 family. As to quaternary structure, part of the 50S ribosomal subunit.

It localises to the plastid. Its subcellular location is the chloroplast. In Liriodendron tulipifera (Tuliptree), this protein is Large ribosomal subunit protein uL2cy (rpl2-B).